A 501-amino-acid polypeptide reads, in one-letter code: tRNA (guanine(37)-N(1))-methyltransferase (501 aa).

S-adenosyl-L-methionine is bound by residues histidine 282, 320 to 321, 348 to 349, and asparagine 380; these read DL and DG. The disordered stretch occupies residues 474-501; that stretch reads LQNDQEPPLKRQKTGDPFSGEPQIASDS.

Belongs to the class I-like SAM-binding methyltransferase superfamily. TRM5/TYW2 family. As to quaternary structure, monomer.

The protein resides in the mitochondrion matrix. It localises to the nucleus. The protein localises to the cytoplasm. The catalysed reaction is guanosine(37) in tRNA + S-adenosyl-L-methionine = N(1)-methylguanosine(37) in tRNA + S-adenosyl-L-homocysteine + H(+). Involved in mitochondrial tRNA methylation. Specifically methylates the N1 position of guanosine-37 in various tRNAs. Methylation is not dependent on the nature of the nucleoside 5' of the target nucleoside. This is the first step in the biosynthesis of wybutosine (yW), a modified base adjacent to the anticodon of tRNAs and required for accurate decoding. This Mus musculus (Mouse) protein is tRNA (guanine(37)-N(1))-methyltransferase (Trmt5).